The chain runs to 206 residues: Large ribosomal subunit protein uL4 (206 aa).

The segment at M63–E97 is disordered. The span at Y64–A77 shows a compositional bias: basic residues.

This sequence belongs to the universal ribosomal protein uL4 family. In terms of assembly, part of the 50S ribosomal subunit.

One of the primary rRNA binding proteins, this protein initially binds near the 5'-end of the 23S rRNA. It is important during the early stages of 50S assembly. It makes multiple contacts with different domains of the 23S rRNA in the assembled 50S subunit and ribosome. Its function is as follows. Forms part of the polypeptide exit tunnel. The protein is Large ribosomal subunit protein uL4 of Rhizobium etli (strain CIAT 652).